The following is an 827-amino-acid chain: Polyhomeotic-like protein 2 (827 aa).

3 disordered regions span residues 1–78 (MEKE…QYLQ), 282–316 (GLGA…SDLT), and 482–545 (QEPT…PPQA). The span at 9 to 38 (SVASSASVTIPSTTSVSTSTSAGTLSNSSS) shows a compositional bias: low complexity. Positions 485–498 (TRTELRQSDKESQV) are enriched in basic and acidic residues. Residues 517 to 538 (AMTSGSGNNAPTVTGSAPQNGE) are compositionally biased toward polar residues. The HD1 signature appears at 540–570 (KPPPQAVVKPQILTHVIEGFVIQEGAEPFPV). Residues 609–643 (NNQPEPVRTCEFCGNVDFAFNFKRSKRFCSTVCAK) form an FCS-type zinc finger. Zn(2+) contacts are provided by cysteine 618, cysteine 621, cysteine 637, and cysteine 641. The interval 653-730 (MGLFPGKSSP…EPISPLSNSS (78 aa)) is disordered. A compositionally biased stretch (basic and acidic residues) spans 661-675 (SPEDTKKPKASDESP). 2 stretches are compositionally biased toward polar residues: residues 687–696 (PSIQTTTGAS) and 708–717 (GESSQCSDMS). The 65-residue stretch at 763 to 827 (WNVEDVYEFI…FARISMLKDS (65 aa)) folds into the SAM domain.

Component of a PRC1-like complex. Isoform 1 expression is stronger at the posterior border than in the anterior region within individual somites; On the contrary, isoform 2 expression is higher at the posterior border.

It localises to the nucleus. Component of a Polycomb group (PcG) multiprotein PRC1-like complex, a complex class required to maintain the transcriptionally repressive state of many genes, including Hox genes, throughout development. PcG PRC1 complex acts via chromatin remodeling and modification of histones; it mediates monoubiquitination of histone H2A 'Lys-119', rendering chromatin heritably changed in its expressibility. This is Polyhomeotic-like protein 2 (phc2) from Danio rerio (Zebrafish).